The sequence spans 706 residues: Elongation factor G (706 aa).

One can recognise a tr-type G domain in the interval 15–291; it reads LKTRNIGISA…GVLDYLASPV (277 aa). GTP is bound by residues 24–31, 91–95, and 145–148; these read AHIDSGKT, DTPGH, and NKLD.

Belongs to the TRAFAC class translation factor GTPase superfamily. Classic translation factor GTPase family. EF-G/EF-2 subfamily.

It is found in the cytoplasm. Catalyzes the GTP-dependent ribosomal translocation step during translation elongation. During this step, the ribosome changes from the pre-translocational (PRE) to the post-translocational (POST) state as the newly formed A-site-bound peptidyl-tRNA and P-site-bound deacylated tRNA move to the P and E sites, respectively. Catalyzes the coordinated movement of the two tRNA molecules, the mRNA and conformational changes in the ribosome. The chain is Elongation factor G from Leptospira borgpetersenii serovar Hardjo-bovis (strain JB197).